A 510-amino-acid polypeptide reads, in one-letter code: MKTLLAVLLAACVLTQVLSAPSNEQRVRRNMIRGRPRGGMKKTPPMSSVSHMINFDNVVSSTFTQTLDHFDSSVGKTFQQRYYHNNQWYKAGGPAFLMLGGEGPESSYWVSYPGLEITNLAAKQGAWVFDIEHRFYGETHPTSDMSVPNLKYLSSAQAIEDAAAFIKAMTAKFPQLANAKWVTFGGSYSGALAAWTRAKHPELVYAAVGSSGPVQAEVDFKEYLEVVQNSITRNSTECAASVTQGFNLVASLLQTSDGRKQLKTAFHLCQDIQMDDKSLKYFWETVYSPYMEVVQYSGDAAGSFATQLTISHAICRYHINTKSTPLQKLKQVNDYFNQVSGYFGCNDIDYNGFISFMKDETFGEAQSDRAWVWQTCTEFGYYQSTSSATAGPWFGGVSNLPAQYYIDECTAIYGAAYNSQEVQTSVDYTNQYYGGRDNLNTDRILLPNGDIDPWHALGKLTSSNSNIVPVVINGTAHCADMYGASSLDSMYLTNARQRISDVLDGWLHAN.

Positions 1–19 (MKTLLAVLLAACVLTQVLS) are cleaved as a signal peptide. The active-site Charge relay system is the S187. N234 is a glycosylation site (N-linked (GlcNAc...) asparagine). The active-site Charge relay system is the D452. N-linked (GlcNAc...) asparagine glycosylation is present at N473. H477 functions as the Charge relay system in the catalytic mechanism.

The protein belongs to the peptidase S28 family.

The sequence is that of Putative serine protease K12H4.7 from Caenorhabditis elegans.